The following is a 107-amino-acid chain: Nucleoid-associated protein HNE_0371 (107 aa).

This sequence belongs to the YbaB/EbfC family. Homodimer.

Its subcellular location is the cytoplasm. It is found in the nucleoid. Its function is as follows. Binds to DNA and alters its conformation. May be involved in regulation of gene expression, nucleoid organization and DNA protection. This chain is Nucleoid-associated protein HNE_0371, found in Hyphomonas neptunium (strain ATCC 15444).